Reading from the N-terminus, the 89-residue chain is MAKKSKIAKEQKRQELVNKYYELRKELKAKGDYEALRKLPRDSSPTRLTRRCKVTGRPRGVLRKFEMSRIAFREHAHKGQIPGVKKSSW.

It belongs to the universal ribosomal protein uS14 family. In terms of assembly, part of the 30S ribosomal subunit. Contacts proteins S3 and S10.

Binds 16S rRNA, required for the assembly of 30S particles and may also be responsible for determining the conformation of the 16S rRNA at the A site. This is Small ribosomal subunit protein uS14A from Staphylococcus epidermidis (strain ATCC 35984 / DSM 28319 / BCRC 17069 / CCUG 31568 / BM 3577 / RP62A).